The sequence spans 447 residues: MREIVHLQTGQCGNQIGAAFWQTISGEHGLDGSGVYNGTSDLQLERMNVYFNEASGNKYVPRAVLVDLEPGTMDAVRAGPFGQLFRPDNFVFGQSGAGNNWAKGHYTEGAELVDQVLDVVRREAEGCDCLQGFQITHSLGGGTGAGMGTLLISKIREEFPDRMMATFSVMPSPKVSDTVVEPYNATLSVHQLVENSDATFCIDNEALYDICMRTLKLNNPSYGDLNHLVSAVMSGVTTCLRFPGQLNSDLRKLAVNMVPFPRLHFFMVGFAPLTSRGAHSFRAVTVPELTQQIFDPKNMMAASDFRNGRYLTCSAIYRGKVSMKEVEDQIRNVQNKNTAYFVEWIPNNVQTALCSIPPRGLKMSSTFVGNSTSIQELFKRVGDQFSAMFRRKAFLHWYTGEGMDEMEFTEAESNMNDLVSEYQQYQEASVSDAEEEYDEEAPLEGEE.

GTP contacts are provided by Q11, E69, S138, G142, T143, G144, N204, and N226. Residue E69 coordinates Mg(2+). Residues 424-447 (QYQEASVSDAEEEYDEEAPLEGEE) form a disordered region. The segment covering 432–447 (DAEEEYDEEAPLEGEE) has biased composition (acidic residues).

The protein belongs to the tubulin family. As to quaternary structure, dimer of alpha and beta chains. A typical microtubule is a hollow water-filled tube with an outer diameter of 25 nm and an inner diameter of 15 nM. Alpha-beta heterodimers associate head-to-tail to form protofilaments running lengthwise along the microtubule wall with the beta-tubulin subunit facing the microtubule plus end conferring a structural polarity. Microtubules usually have 13 protofilaments but different protofilament numbers can be found in some organisms and specialized cells. Mg(2+) serves as cofactor.

It localises to the cytoplasm. The protein resides in the cytoskeleton. Tubulin is the major constituent of microtubules, a cylinder consisting of laterally associated linear protofilaments composed of alpha- and beta-tubulin heterodimers. Microtubules grow by the addition of GTP-tubulin dimers to the microtubule end, where a stabilizing cap forms. Below the cap, tubulin dimers are in GDP-bound state, owing to GTPase activity of alpha-tubulin. This Zymoseptoria tritici (Speckled leaf blotch fungus) protein is Tubulin beta chain (TUB1).